We begin with the raw amino-acid sequence, 243 residues long: Protein IN2-1 homolog A (243 aa).

One can recognise a GST N-terminal domain in the interval 31–112 (GTTRLYICYF…YIDSHFEGPA (82 aa)). Glutathione contacts are provided by residues K70, V84, and 96–97 (ES). The GST C-terminal domain occupies 117-240 (DPEKRQFADE…YLLDLAKTHL (124 aa)).

Belongs to the GST superfamily. HSP26 family.

The sequence is that of Protein IN2-1 homolog A from Oryza sativa subsp. japonica (Rice).